We begin with the raw amino-acid sequence, 156 residues long: MPRKGPAPKRPVIIDPVYGSPLVTSLINKVLLNGKRSTAERIVYGAMEGLREKTGNDPVITLKRALENIKPTLEVKSRRVGGATYQVPIEVKPGRANTLALRWLVGYSRARREKTMTERLLNELLDASNGLGAAVKKREDTHKMAESNKAFAHYRW.

This sequence belongs to the universal ribosomal protein uS7 family. As to quaternary structure, part of the 30S ribosomal subunit. Contacts proteins S9 and S11.

One of the primary rRNA binding proteins, it binds directly to 16S rRNA where it nucleates assembly of the head domain of the 30S subunit. Is located at the subunit interface close to the decoding center, probably blocks exit of the E-site tRNA. The sequence is that of Small ribosomal subunit protein uS7 (rspG) from Streptomyces coelicolor (strain ATCC BAA-471 / A3(2) / M145).